A 362-amino-acid polypeptide reads, in one-letter code: MQKIKVLCVDDSALIRSLMTEIINGQPDMTVVATAPDPLVARELIKQHNPDVLTLDVEMPRMDGLDFLEKLMRLRPMPVVMVSSLTERGNEITLRALELGAVDFVTKPKVGIRDGMLDYSEKLADKIRAAARARVRQSAPVQHAAAHAAHAPVGAAPLFNNPLLSTEKLIIVGASTGGTEAIREVLVPLPPDAPAVLIAQHMPPGFTKSFAQRLNGLCRITVKEAEHGERVLPGHAYIAPGHAHLLLARSGANYIAHLSDEPPVNRHRPSVDVLFRSAAQHAGKNAVGVILTGMGRDGAAGLLDMKKAGAYTLAQDEASCIVFGMPREAIALGAADEIASLPEMSRRVMARLSSMGDRVQRV.

The Response regulatory domain maps to K5–K122. D56 bears the 4-aspartylphosphate mark. The region spanning L163 to M355 is the CheB-type methylesterase domain. Active-site residues include S175, H201, and D297.

It belongs to the CheB family. Phosphorylated by CheA. Phosphorylation of the N-terminal regulatory domain activates the methylesterase activity.

It localises to the cytoplasm. It carries out the reaction [protein]-L-glutamate 5-O-methyl ester + H2O = L-glutamyl-[protein] + methanol + H(+). The enzyme catalyses L-glutaminyl-[protein] + H2O = L-glutamyl-[protein] + NH4(+). In terms of biological role, involved in chemotaxis. Part of a chemotaxis signal transduction system that modulates chemotaxis in response to various stimuli. Catalyzes the demethylation of specific methylglutamate residues introduced into the chemoreceptors (methyl-accepting chemotaxis proteins or MCP) by CheR. Also mediates the irreversible deamidation of specific glutamine residues to glutamic acid. This Paraburkholderia xenovorans (strain LB400) protein is Protein-glutamate methylesterase/protein-glutamine glutaminase.